Reading from the N-terminus, the 337-residue chain is 4-hydroxyproline 2-epimerase 2 (337 aa).

C90 (proton acceptor) is an active-site residue. Substrate-binding positions include G91–H92, H223, and D249. C253 functions as the Proton donor in the catalytic mechanism. G254–T255 contacts substrate.

It belongs to the proline racemase family.

It catalyses the reaction trans-4-hydroxy-L-proline = cis-4-hydroxy-D-proline. Functionally, catalyzes the epimerization of trans-4-hydroxy-L-proline (t4LHyp) to cis-4-hydroxy-D-proline (c4DHyp). Is likely involved in a degradation pathway that converts t4LHyp to alpha-ketoglutarate. Can also catalyze the epimerization of trans-3-hydroxy-L-proline (t3LHyp) to cis-3-hydroxy-D-proline (c3DHyp), albeit with 170-fold lower efficiency. Displays no proline racemase activity. The polypeptide is 4-hydroxyproline 2-epimerase 2 (Brucella anthropi (strain ATCC 49188 / DSM 6882 / CCUG 24695 / JCM 21032 / LMG 3331 / NBRC 15819 / NCTC 12168 / Alc 37) (Ochrobactrum anthropi)).